Reading from the N-terminus, the 234-residue chain is Orotidine 5'-phosphate decarboxylase (234 aa).

Substrate is bound by residues aspartate 11, lysine 33, 60–69 (DLKFHDIPNT), threonine 120, arginine 181, glutamine 190, glycine 210, and arginine 211. The active-site Proton donor is lysine 62.

Belongs to the OMP decarboxylase family. Type 1 subfamily. As to quaternary structure, homodimer.

It catalyses the reaction orotidine 5'-phosphate + H(+) = UMP + CO2. It functions in the pathway pyrimidine metabolism; UMP biosynthesis via de novo pathway; UMP from orotate: step 2/2. Its function is as follows. Catalyzes the decarboxylation of orotidine 5'-monophosphate (OMP) to uridine 5'-monophosphate (UMP). In Aliivibrio salmonicida (strain LFI1238) (Vibrio salmonicida (strain LFI1238)), this protein is Orotidine 5'-phosphate decarboxylase.